Consider the following 307-residue polypeptide: Aspartate carbamoyltransferase catalytic subunit (307 aa).

Carbamoyl phosphate contacts are provided by R59 and T60. K87 lines the L-aspartate pocket. Carbamoyl phosphate-binding residues include R109, H137, and Q140. L-aspartate contacts are provided by R173 and R223. 2 residues coordinate carbamoyl phosphate: G266 and P267.

This sequence belongs to the aspartate/ornithine carbamoyltransferase superfamily. ATCase family. Heterododecamer (2C3:3R2) of six catalytic PyrB chains organized as two trimers (C3), and six regulatory PyrI chains organized as three dimers (R2).

The catalysed reaction is carbamoyl phosphate + L-aspartate = N-carbamoyl-L-aspartate + phosphate + H(+). It functions in the pathway pyrimidine metabolism; UMP biosynthesis via de novo pathway; (S)-dihydroorotate from bicarbonate: step 2/3. In terms of biological role, catalyzes the condensation of carbamoyl phosphate and aspartate to form carbamoyl aspartate and inorganic phosphate, the committed step in the de novo pyrimidine nucleotide biosynthesis pathway. The sequence is that of Aspartate carbamoyltransferase catalytic subunit from Helicobacter pylori (strain Shi470).